The sequence spans 259 residues: Phosphate import ATP-binding protein PstB (259 aa).

One can recognise an ABC transporter domain in the interval 13–254 (IQVRDLNFYY…PAQRQTEDYI (242 aa)). 45–52 (GPSGCGKS) contacts ATP.

This sequence belongs to the ABC transporter superfamily. Phosphate importer (TC 3.A.1.7) family. In terms of assembly, the complex is composed of two ATP-binding proteins (PstB), two transmembrane proteins (PstC and PstA) and a solute-binding protein (PstS).

It localises to the cell inner membrane. It catalyses the reaction phosphate(out) + ATP + H2O = ADP + 2 phosphate(in) + H(+). Part of the ABC transporter complex PstSACB involved in phosphate import. Responsible for energy coupling to the transport system. The protein is Phosphate import ATP-binding protein PstB of Edwardsiella tarda.